The primary structure comprises 287 residues: Eukaryotic translation initiation factor 3 subunit G (287 aa).

Residues Glu-163–Glu-207 form a disordered region. An RRM domain is found at Asn-208 to Phe-286.

Belongs to the eIF-3 subunit G family. As to quaternary structure, component of the eukaryotic translation initiation factor 3 (eIF-3) complex.

It is found in the cytoplasm. Its function is as follows. RNA-binding component of the eukaryotic translation initiation factor 3 (eIF-3) complex, which is involved in protein synthesis of a specialized repertoire of mRNAs and, together with other initiation factors, stimulates binding of mRNA and methionyl-tRNAi to the 40S ribosome. The eIF-3 complex specifically targets and initiates translation of a subset of mRNAs involved in cell proliferation. This subunit can bind 18S rRNA. In Brugia malayi (Filarial nematode worm), this protein is Eukaryotic translation initiation factor 3 subunit G.